The following is a 189-amino-acid chain: Protein F29A7.6 (189 aa).

The disordered stretch occupies residues lysine 124–asparagine 161. Positions alanine 133–asparagine 161 are enriched in basic and acidic residues.

The protein belongs to the MPP6 family.

This Caenorhabditis elegans protein is Protein F29A7.6.